Consider the following 950-residue polypeptide: Glycine dehydrogenase (decarboxylating) (950 aa).

Residue Lys-698 is modified to N6-(pyridoxal phosphate)lysine.

It belongs to the GcvP family. The glycine cleavage system is composed of four proteins: P, T, L and H. It depends on pyridoxal 5'-phosphate as a cofactor.

The enzyme catalyses N(6)-[(R)-lipoyl]-L-lysyl-[glycine-cleavage complex H protein] + glycine + H(+) = N(6)-[(R)-S(8)-aminomethyldihydrolipoyl]-L-lysyl-[glycine-cleavage complex H protein] + CO2. The glycine cleavage system catalyzes the degradation of glycine. The P protein binds the alpha-amino group of glycine through its pyridoxal phosphate cofactor; CO(2) is released and the remaining methylamine moiety is then transferred to the lipoamide cofactor of the H protein. The polypeptide is Glycine dehydrogenase (decarboxylating) (Neisseria meningitidis serogroup A / serotype 4A (strain DSM 15465 / Z2491)).